The chain runs to 305 residues: Probable cell division protein WhiA (305 aa).

Positions 269-302 (TIKELGELLEPSLGKSGVNHRLRKLVEQANELRK) form a DNA-binding region, H-T-H motif.

The protein belongs to the WhiA family.

In terms of biological role, involved in cell division and chromosome segregation. The sequence is that of Probable cell division protein WhiA from Lactococcus lactis subsp. lactis (strain IL1403) (Streptococcus lactis).